Reading from the N-terminus, the 248-residue chain is Allergin-1 (248 aa).

The N-terminal stretch at 1–33 is a signal peptide; it reads MGDDDTPVCLSVASCKGVSCWLDKLLLWALTLS. Topologically, residues 34-150 are extracellular; the sequence is ITLRNTAVDC…DESCSSCLLS (117 aa). Residues 54-137 form the Ig-like C2-type domain; that stretch reads PNLNSSMSVV…SKYSQNFNFT (84 aa). A glycan (N-linked (GlcNAc...) asparagine) is linked at asparagine 68. A disulfide bond links cysteine 73 and cysteine 120. Residue asparagine 135 is glycosylated (N-linked (GlcNAc...) asparagine). Residues 151 to 171 form a helical membrane-spanning segment; it reads LLLPGVLLGLILPGLAFLIYL. Residues 172 to 248 are Cytoplasmic-facing; the sequence is KYKKGCTGKT…DDYIYSELTY (77 aa). 2 consecutive short sequence motifs (ITIM motif) follow at residues 216–221 and 241–246; these read IHYTTP and YIYSEL. Tyrosine 218 and tyrosine 243 each carry phosphotyrosine.

As to quaternary structure, monomer. Interacts (tyrosine-phosphorylated) with PTPN6, PTPN11 and INPP5D. N-glycosylated. In terms of tissue distribution, mast cell-specific. Expressed in primary and transformed mast cells.

The protein resides in the cell membrane. In terms of biological role, immunoglobulin-like receptor which plays an inhibitory role in degranulation of mast cells. Negatively regulates IgE-mediated mast cell activation and suppresses the type I immediate hypersensitivity reaction. In Rattus norvegicus (Rat), this protein is Allergin-1 (Milr1).